The primary structure comprises 209 residues: GTP-binding protein RHB1 (209 aa).

Residue M1 is modified to N-acetylmethionine. GTP-binding residues include G28, K29, T30, T31, V42, Y45, T48, D132, and A172. T30 contacts Mg(2+). Positions 45-53 match the Effector region motif; it reads YYPTIENEF. Residue T48 coordinates Mg(2+). A Cysteine methyl ester modification is found at C206. Residue C206 is the site of S-farnesyl cysteine attachment. A propeptide spans 207 to 209 (removed in mature form); that stretch reads SIM.

It belongs to the small GTPase superfamily. Rheb family. As to quaternary structure, interacts with BTN2.

It localises to the cell membrane. It carries out the reaction GTP + H2O = GDP + phosphate + H(+). Its function is as follows. Binds GTP and exhibits intrinsic GTPase activity. Involved in the regulation of arginine and lysine uptake. Acts through the CAN1 permease. This chain is GTP-binding protein RHB1 (RHB1), found in Saccharomyces cerevisiae (strain ATCC 204508 / S288c) (Baker's yeast).